The chain runs to 295 residues: Structure-specific endonuclease subunit SLX1 (295 aa).

Positions 11–93 (EFYGVYILQS…QHPKTSRHMA (83 aa)) constitute a GIY-YIG domain. Residues 85-133 (HPKTSRHMAGGGGSVTATAETAKSAPVAGKSDATSPAKNRRNAAPVARS) are disordered. The SLX1-type zinc finger occupies 205-272 (CCLCSDAIDY…IPSDVSCSQC (68 aa)).

Belongs to the SLX1 family. As to quaternary structure, forms a heterodimer with SLX4. A divalent metal cation is required as a cofactor.

It is found in the nucleus. Its function is as follows. Catalytic subunit of the SLX1-SLX4 structure-specific endonuclease that resolves DNA secondary structures generated during DNA repair and recombination. Has endonuclease activity towards branched DNA substrates, introducing single-strand cuts in duplex DNA close to junctions with ss-DNA. The protein is Structure-specific endonuclease subunit SLX1 of Meyerozyma guilliermondii (strain ATCC 6260 / CBS 566 / DSM 6381 / JCM 1539 / NBRC 10279 / NRRL Y-324) (Yeast).